The primary structure comprises 396 residues: N-acyl-phosphatidylethanolamine-hydrolyzing phospholipase D (396 aa).

M1 is subject to N-acetylmethionine. Polar residues-rich tracts occupy residues 1 to 12 (MDENENSQSPAP) and 26 to 37 (NSVQNSGGSESS). The tract at residues 1–41 (MDENENSQSPAPSHQYPKETLRKRQNSVQNSGGSESSRLSR) is disordered. Residues H185 and H187 each coordinate Zn(2+). Y188 lines the an N-acyl-1,2-diacyl-sn-glycero-3-phosphoethanolamine pocket. The Zn(2+) site is built by D189, H190, and H253. K256 provides a ligand contact to deoxycholate. Zn(2+) is bound at residue D284. An an N-acyl-1,2-diacyl-sn-glycero-3-phosphoethanolamine-binding site is contributed by H321. H343 contributes to the Zn(2+) binding site. A348 contributes to the deoxycholate binding site.

The protein belongs to the NAPE-PLD family. Homodimer. Bile acids promote the assembly of inactive monomers into an active dimer and enable catalysis. Requires Zn(2+) as cofactor. In terms of tissue distribution, widely expressed. Highest expression in brain, kidney and testis (at protein level). Expressed in adipose tissue (at protein level).

It localises to the golgi apparatus membrane. Its subcellular location is the early endosome membrane. The protein localises to the nucleus envelope. The protein resides in the nucleus. It is found in the nucleoplasm. It catalyses the reaction an N-acyl-1,2-diacyl-sn-glycero-3-phosphoethanolamine + H2O = an N-acylethanolamine + a 1,2-diacyl-sn-glycero-3-phosphate + H(+). The catalysed reaction is N-butanoyl-1-hexadecanoyl-2-(9Z,12Z-octadecadienoyl)-sn-glycero-3-phosphoethanolamine + H2O = N-butanoyl ethanolamine + 1-hexadecanoyl-2-(9Z,12Z-octadecadienoyl)-sn-glycero-3-phosphate + H(+). The enzyme catalyses N-hexanoyl-1-hexadecanoyl-2-(9Z,12Z-octadecadienoyl)-sn-glycero-3-phosphoethanolamine + H2O = N-hexanoyl ethanolamine + 1-hexadecanoyl-2-(9Z,12Z-octadecadienoyl)-sn-glycero-3-phosphate + H(+). It carries out the reaction N-octanoyl-1-hexadecanoyl-2-(9Z,12Z-octadecadienoyl)-sn-glycero-3-phosphoethanolamine + H2O = N-octanoyl ethanolamine + 1-hexadecanoyl-2-(9Z,12Z-octadecadienoyl)-sn-glycero-3-phosphate + H(+). It catalyses the reaction N-decanoyl-1-hexadecanoyl-2-(9Z,12Z-octadecadienoyl)-sn-glycero-3-phosphoethanolamine + H2O = N-decanoyl ethanolamine + 1-hexadecanoyl-2-(9Z,12Z-octadecadienoyl)-sn-glycero-3-phosphate + H(+). The catalysed reaction is N-dodecanoyl-1,2-di-(9Z-octadecenoyl)-sn-glycero-3-phosphoethanolamine + H2O = N-dodecanoylethanolamine + 1,2-di-(9Z-octadecenoyl)-sn-glycero-3-phosphate + H(+). The enzyme catalyses N-tetradecanoyl-1,2-di-(9Z-octadecenoyl)-sn-glycero-3-phosphoethanolamine + H2O = N-tetradecanoylethanolamine + 1,2-di-(9Z-octadecenoyl)-sn-glycero-3-phosphate + H(+). It carries out the reaction N-hexadecanoyl-1,2-di-(9Z-octadecenoyl)-sn-glycero-3-phosphoethanolamine + H2O = N-hexadecanoylethanolamine + 1,2-di-(9Z-octadecenoyl)-sn-glycero-3-phosphate + H(+). It catalyses the reaction N,1-dihexadecanoyl-2-(9Z,12Z-octadecadienoyl)-sn-glycero-3-phosphoethanolamine + H2O = 1-hexadecanoyl-2-(9Z,12Z-octadecadienoyl)-sn-glycero-3-phosphate + N-hexadecanoylethanolamine + H(+). The catalysed reaction is N-octadecanoyl-1,2-di-(9Z-octadecenoyl)-sn-glycero-3-phosphoethanolamine + H2O = N-octadecanoyl ethanolamine + 1,2-di-(9Z-octadecenoyl)-sn-glycero-3-phosphate + H(+). The enzyme catalyses N,1,2-tri-(9Z-octadecenoyl)-sn-glycero-3-phosphoethanolamine + H2O = N-(9Z-octadecenoyl) ethanolamine + 1,2-di-(9Z-octadecenoyl)-sn-glycero-3-phosphate + H(+). It carries out the reaction N-(5Z,8Z,11Z,14Z-eicosatetraenoyl)-1,2-diacyl-sn-glycero-3-phosphoethanolamine + H2O = N-(5Z,8Z,11Z,14Z-eicosatetraenoyl)-ethanolamine + a 1,2-diacyl-sn-glycero-3-phosphate + H(+). It catalyses the reaction N-(5Z,8Z,11Z,14Z-eicosatetraenoyl)-1,2-di-(9Z-octadecenoyl)-sn-glycero-3-phosphoethanolamine + H2O = N-(5Z,8Z,11Z,14Z-eicosatetraenoyl)-ethanolamine + 1,2-di-(9Z-octadecenoyl)-sn-glycero-3-phosphate + H(+). The catalysed reaction is 1-O-(1Z-octadecenoyl)-2-(9Z-octadecenoyl)-sn-glycero-3-phospho-N-hexadecanoyl-ethanolamine + H2O = 1-O-(1Z-octadecenoyl)-2-(9Z-octadecenoyl)-sn-glycero-3-phosphate + N-hexadecanoylethanolamine + H(+). The enzyme catalyses N,1-diacyl-sn-glycero-3-phosphoethanolamine + H2O = an N-acylethanolamine + a 1-acyl-sn-glycero-3-phosphate + H(+). It carries out the reaction N,1-dihexadecanoyl-sn-glycero-3-phosphoethanolamine + H2O = N-hexadecanoylethanolamine + 1-hexadecanoyl-sn-glycero-3-phosphate + H(+). It catalyses the reaction N-(5Z,8Z,11Z,14Z-eicosatetraenoyl)-1-(9Z-octadecenoyl)-sn-glycero-3-phosphoethanolamine + H2O = N-(5Z,8Z,11Z,14Z-eicosatetraenoyl)-ethanolamine + 1-(9Z-octadecenoyl)-sn-glycero-3-phosphate + H(+). Activated by divalent cations. Activated by bile acids. Activated by membrane phospholipids such as phosphatidylethanolamines. Inhibited by cardiolipins. D-type phospholipase that hydrolyzes N-acyl-phosphatidylethanolamines (NAPEs) to produce bioactive N-acylethanolamines/fatty acid ethanolamides (NAEs/FAEs) and phosphatidic acid. Cleaves the terminal phosphodiester bond of diacyl- and alkenylacyl-NAPEs, primarily playing a role in the generation of long-chain saturated and monounsaturated NAEs in the brain. May control NAPE homeostasis in dopaminergic neuron membranes and regulate neuron survival, partly through RAC1 activation. As a regulator of lipid metabolism in the adipose tissue, mediates the crosstalk between adipocytes, gut microbiota and immune cells to control body temperature and weight. In particular, regulates energy homeostasis by promoting cold-induced brown or beige adipocyte differentiation program to generate heat from fatty acids and glucose. Has limited D-type phospholipase activity toward N-acyl lyso-NAPEs. In Rattus norvegicus (Rat), this protein is N-acyl-phosphatidylethanolamine-hydrolyzing phospholipase D (Napepld).